Reading from the N-terminus, the 377-residue chain is N-acetyldiaminopimelate deacetylase (377 aa).

Aspartate 70 is a catalytic residue. Glutamate 129 acts as the Proton acceptor in catalysis.

The protein belongs to the peptidase M20A family. N-acetyldiaminopimelate deacetylase subfamily.

The catalysed reaction is N-acetyl-(2S,6S)-2,6-diaminopimelate + H2O = (2S,6S)-2,6-diaminopimelate + acetate. The protein operates within amino-acid biosynthesis; L-lysine biosynthesis via DAP pathway; LL-2,6-diaminopimelate from (S)-tetrahydrodipicolinate (acetylase route): step 3/3. Its function is as follows. Catalyzes the conversion of N-acetyl-diaminopimelate to diaminopimelate and acetate. The sequence is that of N-acetyldiaminopimelate deacetylase from Streptococcus thermophilus (strain CNRZ 1066).